A 66-amino-acid chain; its full sequence is Large ribosomal subunit protein bL33c (66 aa).

Belongs to the bacterial ribosomal protein bL33 family.

It localises to the plastid. It is found in the chloroplast. The polypeptide is Large ribosomal subunit protein bL33c (Vitis vinifera (Grape)).